We begin with the raw amino-acid sequence, 208 residues long: NAD(P)H-quinone oxidoreductase subunit I (208 aa).

4Fe-4S ferredoxin-type domains are found at residues G55 to V84 and R95 to E124. C64, C67, C70, C74, C104, C107, C110, and C114 together coordinate [4Fe-4S] cluster.

Belongs to the complex I 23 kDa subunit family. As to quaternary structure, NDH-1 is composed of at least 11 different subunits. [4Fe-4S] cluster is required as a cofactor.

It localises to the cellular thylakoid membrane. The catalysed reaction is a plastoquinone + NADH + (n+1) H(+)(in) = a plastoquinol + NAD(+) + n H(+)(out). The enzyme catalyses a plastoquinone + NADPH + (n+1) H(+)(in) = a plastoquinol + NADP(+) + n H(+)(out). NDH-1 shuttles electrons from an unknown electron donor, via FMN and iron-sulfur (Fe-S) centers, to quinones in the respiratory and/or the photosynthetic chain. The immediate electron acceptor for the enzyme in this species is believed to be plastoquinone. Couples the redox reaction to proton translocation, and thus conserves the redox energy in a proton gradient. This is NAD(P)H-quinone oxidoreductase subunit I from Prochlorococcus marinus (strain AS9601).